We begin with the raw amino-acid sequence, 1012 residues long: F-box DNA helicase 1 (1012 aa).

Positions 1–54 (MHLTADDCEALSRSTEGLSSLTQPLNQRRSRGDVNRGLQPTHRTRTQPGAQGRQ) are disordered. The span at 12-27 (SRSTEGLSSLTQPLNQ) shows a compositional bias: polar residues. The F-box domain maps to 185-234 (QGSIEDLPDEVLRSIFAFLPVTDLYQSLSLVCRRWRIIVGDPWFIPWKKL). The UvrD-like helicase ATP-binding domain maps to 427–692 (THEQQRILNH…YYLTQSFRFG (266 aa)). 448–455 (AFAGTGKT) contributes to the ATP binding site.

This sequence belongs to the helicase family. UvrD subfamily. Part of the SCF (SKP1-CUL1-F-box) E3 ubiquitin-protein ligase complex SCF(FBH1).

It localises to the nucleus. The protein resides in the chromosome. The enzyme catalyses Couples ATP hydrolysis with the unwinding of duplex DNA by translocating in the 3'-5' direction.. It catalyses the reaction ATP + H2O = ADP + phosphate + H(+). It functions in the pathway protein modification; protein ubiquitination. In terms of biological role, 3'-5' DNA helicase and substrate-recognition component of the SCF(FBH1) E3 ubiquitin ligase complex that plays a key role in response to stalled/damaged replication forks. Involved in genome maintenance by acting as an anti-recombinogenic helicase and preventing extensive strand exchange during homologous recombination: promotes RAD51 filament dissolution from stalled forks, thereby inhibiting homologous recombination and preventing excessive recombination. Also promotes cell death and DNA double-strand breakage in response to replication stress: promotes the endonucleolytic DNA cleavage following prolonged replication stress via its helicase activity, possibly to eliminate cells with excessive replication stress. The polypeptide is F-box DNA helicase 1 (Gallus gallus (Chicken)).